A 309-amino-acid chain; its full sequence is Acetylglutamate kinase (309 aa).

Residues 82 to 83 (GG), arginine 104, and asparagine 206 contribute to the substrate site.

This sequence belongs to the acetylglutamate kinase family. ArgB subfamily.

It localises to the cytoplasm. It carries out the reaction N-acetyl-L-glutamate + ATP = N-acetyl-L-glutamyl 5-phosphate + ADP. Its pathway is amino-acid biosynthesis; L-arginine biosynthesis; N(2)-acetyl-L-ornithine from L-glutamate: step 2/4. In terms of biological role, catalyzes the ATP-dependent phosphorylation of N-acetyl-L-glutamate. The protein is Acetylglutamate kinase of Cupriavidus metallidurans (strain ATCC 43123 / DSM 2839 / NBRC 102507 / CH34) (Ralstonia metallidurans).